The following is a 364-amino-acid chain: Chorismate synthase (364 aa).

Residue R48 participates in NADP(+) binding. FMN is bound by residues 126–128 (RSS), G288, 303–307 (KPIAS), and R329.

Belongs to the chorismate synthase family. As to quaternary structure, homotetramer. FMNH2 is required as a cofactor.

It carries out the reaction 5-O-(1-carboxyvinyl)-3-phosphoshikimate = chorismate + phosphate. It participates in metabolic intermediate biosynthesis; chorismate biosynthesis; chorismate from D-erythrose 4-phosphate and phosphoenolpyruvate: step 7/7. Catalyzes the anti-1,4-elimination of the C-3 phosphate and the C-6 proR hydrogen from 5-enolpyruvylshikimate-3-phosphate (EPSP) to yield chorismate, which is the branch point compound that serves as the starting substrate for the three terminal pathways of aromatic amino acid biosynthesis. This reaction introduces a second double bond into the aromatic ring system. This Desulfovibrio desulfuricans (strain ATCC 27774 / DSM 6949 / MB) protein is Chorismate synthase.